The chain runs to 208 residues: Uridine kinase (208 aa).

12–19 (GGSGGGKT) serves as a coordination point for ATP.

Belongs to the uridine kinase family.

It is found in the cytoplasm. It catalyses the reaction uridine + ATP = UMP + ADP + H(+). It carries out the reaction cytidine + ATP = CMP + ADP + H(+). It functions in the pathway pyrimidine metabolism; CTP biosynthesis via salvage pathway; CTP from cytidine: step 1/3. Its pathway is pyrimidine metabolism; UMP biosynthesis via salvage pathway; UMP from uridine: step 1/1. The polypeptide is Uridine kinase (Streptococcus equi subsp. equi (strain 4047)).